A 156-amino-acid polypeptide reads, in one-letter code: Low molecular weight protein-tyrosine-phosphatase YfkJ (156 aa).

Cys8 functions as the Nucleophile in the catalytic mechanism. The active site involves Arg14. The active-site Proton donor is Asp125.

This sequence belongs to the low molecular weight phosphotyrosine protein phosphatase family.

It catalyses the reaction O-phospho-L-tyrosyl-[protein] + H2O = L-tyrosyl-[protein] + phosphate. With respect to regulation, efficiently inhibited by Cu(2+) ion, Zn(2+) ion and N-ethylmaleimide, while the addition of Mg(2+), Ca(2+) or Fe(3+) ions has minimal effect. Inhibited in a competitive manner by vanadate. Dephosphorylates the phosphotyrosine-containing proteins. Involved in ethanol stress resistance. The chain is Low molecular weight protein-tyrosine-phosphatase YfkJ (yfkJ) from Bacillus subtilis (strain 168).